The chain runs to 222 residues: Ribonuclease T (222 aa).

The Exonuclease domain maps to 20–194 (VVIDVETAGF…YDTERTAELF (175 aa)). Mg(2+)-binding residues include Asp23, Glu25, His181, and Asp186. The Proton donor/acceptor role is filled by His181.

This sequence belongs to the RNase T family. As to quaternary structure, homodimer. The cofactor is Mg(2+).

In terms of biological role, trims short 3' overhangs of a variety of RNA species, leaving a one or two nucleotide 3' overhang. Responsible for the end-turnover of tRNA: specifically removes the terminal AMP residue from uncharged tRNA (tRNA-C-C-A). Also appears to be involved in tRNA biosynthesis. This chain is Ribonuclease T, found in Shewanella sp. (strain ANA-3).